Here is a 1404-residue protein sequence, read N- to C-terminus: Clustered mitochondria protein homolog (1404 aa).

Residues 357 to 646 (HTHHADALRS…RLNPVDINWL (290 aa)) enclose the Clu domain. Residues 528–540 (ADELPEADGETTE) are compositionally biased toward acidic residues. Disordered regions lie at residues 528–561 (ADELPEADGETTELAEAAPEKKSPEAKLAQSNKA), 706–735 (DAKAKEAASKEDGEKTEAPEVEAEEPERLD), 996–1046 (GCHG…ARAT), and 1337–1372 (SERQARLPASRRGNSNAGGGAAAITGAGTTASGNGT). Over residues 706 to 723 (DAKAKEAASKEDGEKTEA) the composition is skewed to basic and acidic residues. Low complexity-rich tracts occupy residues 1021–1046 (NEQQNGVKKSNVGAAAAKPTKAARAT) and 1358–1372 (AAITGAGTTASGNGT).

Belongs to the CLU family. As to quaternary structure, may associate with the eukaryotic translation initiation factor 3 (eIF-3) complex.

Its subcellular location is the cytoplasm. Functionally, mRNA-binding protein involved in proper cytoplasmic distribution of mitochondria. The chain is Clustered mitochondria protein homolog from Mycosarcoma maydis (Corn smut fungus).